A 497-amino-acid polypeptide reads, in one-letter code: Chlorophyllide reductase 52.5 kDa chain (497 aa).

3 consecutive transmembrane segments (helical) span residues 65–82 (VATV…LSFI), 126–142 (AIVV…GVPL), and 216–233 (MVIG…GPTV).

The protein belongs to the BchN/ChlN family. In terms of assembly, chlorophyllide reductase is composed of three subunits; BchX, BchY and BchZ. Forms a heterodimer of one BchY and one BchZ subunit.

The protein resides in the cell membrane. The catalysed reaction is 3-deacetyl-3-vinylbacteriochlorophyllide a + 2 oxidized [2Fe-2S]-[ferredoxin] + ADP + phosphate = chlorophyllide a + 2 reduced [2Fe-2S]-[ferredoxin] + ATP + H2O + H(+). It catalyses the reaction bacteriochlorophyllide a + 2 oxidized [2Fe-2S]-[ferredoxin] + ADP + phosphate = 3-acetyl-3-devinylchlorophyllide a + 2 reduced [2Fe-2S]-[ferredoxin] + ATP + H2O + H(+). It carries out the reaction 3-deacetyl-3-(1-hydroxyethyl)bacteriochlorophyllide a + 2 oxidized [2Fe-2S]-[ferredoxin] + ADP + phosphate = 3-devinyl-3-(1-hydroxyethyl)chlorophyllide a + 2 reduced [2Fe-2S]-[ferredoxin] + ATP + H2O + H(+). Its pathway is porphyrin-containing compound metabolism; bacteriochlorophyll biosynthesis (light-independent). In terms of biological role, converts chlorophylls (Chl) into bacteriochlorophylls (BChl) by reducing ring B of the tetrapyrrole. This is Chlorophyllide reductase 52.5 kDa chain (bchY) from Rhodobacter capsulatus (strain ATCC BAA-309 / NBRC 16581 / SB1003).